A 715-amino-acid chain; its full sequence is ATP-dependent zinc metalloprotease YME1L1 (715 aa).

Positions 31 to 54 (VSVNTSASPKQHRDTVAEHEAPSS) are disordered. Over residues 41-52 (QHRDTVAEHEAP) the composition is skewed to basic and acidic residues. Residues 238–258 (ILFVLLLFGIYGLLKNPFLSV) traverse the membrane as a helical segment. The ATP site is built by Val-283, Thr-325, Gly-326, Lys-327, Thr-328, and Leu-329. His-541 is a binding site for Zn(2+). The active site involves Glu-542. Zn(2+) is bound by residues His-545 and Asp-619.

It in the N-terminal section; belongs to the AAA ATPase family. The protein in the C-terminal section; belongs to the peptidase M41 family. As to quaternary structure, homohexamer; may also form heterohexamers. Exists in several complexes of 600-1100 kDa. Interacts with AFG1L. Zn(2+) serves as cofactor. Post-translationally, proteolytically processed by mitochondrial processing peptidase (MPP) to generate the mature form. Degraded in an OMA1-dependent manner in response to oxidative stress.

Its subcellular location is the mitochondrion inner membrane. It localises to the mitochondrion. It catalyses the reaction ATP + H2O = ADP + phosphate + H(+). In terms of biological role, ATP-dependent metalloprotease that catalyzes the degradation of folded and unfolded proteins with a suitable degron sequence in the mitochondrial intermembrane region. Plays an important role in regulating mitochondrial morphology and function by cleaving OPA1 at position S2, giving rise to a form of OPA1 that promotes maintenance of normal mitochondrial structure and mitochondrial protein metabolism. Ensures cell proliferation, maintains normal cristae morphology and complex I respiration activity, promotes antiapoptotic activity and protects mitochondria from the accumulation of oxidatively damaged membrane proteins. Required to control the accumulation of nonassembled respiratory chain subunits (NDUFB6, OX4 and ND1). Involved in the mitochondrial adaptation in response to various signals, such as stress or developmental cues, by mediating degradation of mitochondrial proteins to rewire the mitochondrial proteome. Catalyzes degradation of mitochondrial proteins, such as translocases, lipid transfer proteins and metabolic enzymes in response to nutrient starvation in order to limit mitochondrial biogenesis: mechanistically, YME1L is activated by decreased phosphatidylethanolamine levels caused by LPIN1 activity in response to mTORC1 inhibition. Acts as a regulator of adult neural stem cell self-renewal by promoting mitochondrial proteome rewiring, preserving neural stem and progenitor cells self-renewal. Required for normal, constitutive degradation of PRELID1. Catalyzes the degradation of OMA1 in response to membrane depolarization. Mediates degradation of TIMM17A downstream of the integrated stress response (ISR). Catalyzes degradation of MICU1 when MICU1 is not assembled via an interchain disulfide. The polypeptide is ATP-dependent zinc metalloprotease YME1L1 (Yme1l1) (Rattus norvegicus (Rat)).